A 136-amino-acid polypeptide reads, in one-letter code: Classical arabinogalactan protein 26 (136 aa).

The N-terminal stretch at 1–21 is a signal peptide; sequence MSVSLFTAFTVLSLCLHTSTS. The interval 38–95 is disordered; the sequence is APSSFSASTPAMSPDTSPLFPTPGSSEMSPSPSESSIMPTIPSSLSPPNPDAVTPDPL. Positions 40 to 53 are enriched in polar residues; it reads SSFSASTPAMSPDT. Residues 59 to 81 are compositionally biased toward low complexity; sequence TPGSSEMSPSPSESSIMPTIPSS. Ser-108 carries the GPI-anchor amidated serine lipid modification. Positions 109 to 136 are cleaved as a propeptide — removed in mature form; it reads SSVCLVSSQLSSLLLVLLMLLLAFCSFF.

It belongs to the classical AGP family. In terms of processing, O-glycosylated on the hydroxyproline residues.

The protein resides in the cell membrane. Functionally, proteoglycan that seems to be implicated in diverse developmental roles such as differentiation, cell-cell recognition, embryogenesis and programmed cell death. The chain is Classical arabinogalactan protein 26 (AGP26) from Arabidopsis thaliana (Mouse-ear cress).